Reading from the N-terminus, the 933-residue chain is Bifunctional uridylyltransferase/uridylyl-removing enzyme (933 aa).

The tract at residues 1 to 390 (MLSTRAASAD…RLAALARRKD (390 aa)) is uridylyltransferase. The uridylyl-removing stretch occupies residues 391-745 (VDGFVVDGER…TRIDRGRAIT (355 aa)). The region spanning 506–628 (VDEHTLFALG…VQSPERLRLL (123 aa)) is the HD domain. 2 consecutive ACT domains span residues 746–829 (EVTI…DLTK) and 859–933 (VIEV…DPSA).

This sequence belongs to the GlnD family. The cofactor is Mg(2+).

It catalyses the reaction [protein-PII]-L-tyrosine + UTP = [protein-PII]-uridylyl-L-tyrosine + diphosphate. The enzyme catalyses [protein-PII]-uridylyl-L-tyrosine + H2O = [protein-PII]-L-tyrosine + UMP + H(+). Its activity is regulated as follows. Uridylyltransferase (UTase) activity is inhibited by glutamine, while glutamine activates uridylyl-removing (UR) activity. Uridylylation process is dependent on ATP and 2-oxoglutarate, which are effector molecules that likely bind to PII proteins and control their activity. Modifies, by uridylylation and deuridylylation, the PII regulatory proteins GlnB and GlnZ, in response to the nitrogen status of the cell that GlnD senses through the glutamine level. Under low glutamine levels, catalyzes the conversion of the PII proteins and UTP to PII-UMP and PPi, while under higher glutamine levels, GlnD hydrolyzes PII-UMP to PII and UMP (deuridylylation). Thus, controls uridylylation state and activity of the PII proteins, and plays an important role in the regulation of nitrogen fixation and metabolism. The protein is Bifunctional uridylyltransferase/uridylyl-removing enzyme of Azospirillum brasilense.